Here is a 134-residue protein sequence, read N- to C-terminus: Transcription factor atoh7 (134 aa).

A disordered region spans residues 1–27 (MKPRRPSCADSGSDSDSRDPEKFESAM). The span at 15–27 (SDSRDPEKFESAM) shows a compositional bias: basic and acidic residues. The bHLH domain maps to 28–80 (RRRMAANARERKRMQGLNTAFDRLRKVVPQWGQDKKLSKYETLQMALSYIMAL).

Its subcellular location is the nucleus. The protein resides in the perikaryon. It is found in the cell projection. The protein localises to the axon. In terms of biological role, transcription factor that binds to DNA at the consensus sequence 5'-CAG[GC]TG-3'. Involved in the differentiation of retinal ganglion cells, photoreceptor population and optic nerve development. Required for retinal circadian rhythm photoentrainment. The sequence is that of Transcription factor atoh7 from Danio rerio (Zebrafish).